We begin with the raw amino-acid sequence, 28 residues long: Sarcolamban A (28 aa).

A helical membrane pass occupies residues 7 to 27 (LFTTFGILAILLFFLYLIYAV).

As to quaternary structure, interacts with SERCA. Strongly expressed in embryonic and larval somatic muscles and postembryonic heart.

It localises to the sarcoplasmic reticulum membrane. It is found in the cell membrane. The protein localises to the sarcolemma. Its subcellular location is the T-tubule. In terms of biological role, plays an essential role in the regulation of calcium transport at the sarcoplasmic reticulum (SR), which is secondarily required for regular muscle contraction. The polypeptide is Sarcolamban A (Drosophila melanogaster (Fruit fly)).